A 163-amino-acid chain; its full sequence is Nucleotide-binding protein Cj0374 (163 aa).

This sequence belongs to the YajQ family.

Its function is as follows. Nucleotide-binding protein. The protein is Nucleotide-binding protein Cj0374 of Campylobacter jejuni subsp. jejuni serotype O:2 (strain ATCC 700819 / NCTC 11168).